Reading from the N-terminus, the 159-residue chain is 2-C-methyl-D-erythritol 2,4-cyclodiphosphate synthase (159 aa).

A divalent metal cation is bound by residues D10 and H12. Residues D10–H12 and H37–S38 contribute to the 4-CDP-2-C-methyl-D-erythritol 2-phosphate site. Residue H45 coordinates a divalent metal cation. Residues D59 to G61, F64 to D68, A103 to L109, T135 to E138, F142, and R145 contribute to the 4-CDP-2-C-methyl-D-erythritol 2-phosphate site.

This sequence belongs to the IspF family. Homotrimer. The cofactor is a divalent metal cation.

The enzyme catalyses 4-CDP-2-C-methyl-D-erythritol 2-phosphate = 2-C-methyl-D-erythritol 2,4-cyclic diphosphate + CMP. The protein operates within isoprenoid biosynthesis; isopentenyl diphosphate biosynthesis via DXP pathway; isopentenyl diphosphate from 1-deoxy-D-xylulose 5-phosphate: step 4/6. Involved in the biosynthesis of isopentenyl diphosphate (IPP) and dimethylallyl diphosphate (DMAPP), two major building blocks of isoprenoid compounds. Catalyzes the conversion of 4-diphosphocytidyl-2-C-methyl-D-erythritol 2-phosphate (CDP-ME2P) to 2-C-methyl-D-erythritol 2,4-cyclodiphosphate (ME-CPP) with a corresponding release of cytidine 5-monophosphate (CMP). The sequence is that of 2-C-methyl-D-erythritol 2,4-cyclodiphosphate synthase from Francisella tularensis subsp. tularensis (strain FSC 198).